Reading from the N-terminus, the 1401-residue chain is Uveal autoantigen with coiled-coil domains and ankyrin repeats protein (1401 aa).

ANK repeat units follow at residues 25 to 53 (LMRA…KLDV), 54 to 83 (EGRS…DITT), 87 to 116 (AGRN…PTEH), 120 to 149 (QGRT…SVNA), 153 to 182 (DGRT…DINS), and 186 to 215 (QNRT…DVTL). Ser265 is modified (phosphoserine). Coiled coils occupy residues 273–361 (TKSN…SRFK), 423–827 (ENEI…EKIY), and 856–1368 (ALSS…VIAI). Residue Lys1020 forms a Glycyl lysine isopeptide (Lys-Gly) (interchain with G-Cter in SUMO2) linkage.

In terms of assembly, component of the apoptosome complex, composed of APAF1, pro-caspase-9 and UACA. In the complex, it probably interacts directly with APAF1. Interacts with LGALS3. Interacts with ARF6 and ACTB. Interacts with RAB39A. In terms of tissue distribution, highly expressed in muscle and heart, moderately in liver, kidney and pancreas, and weakly in placenta and lung.

The protein localises to the nucleus. It localises to the cytoplasm. Its subcellular location is the cytoskeleton. In terms of biological role, regulates APAF1 expression and plays an important role in the regulation of stress-induced apoptosis. Promotes apoptosis by regulating three pathways, apoptosome up-regulation, LGALS3/galectin-3 down-regulation and NF-kappa-B inactivation. Regulates the redistribution of APAF1 into the nucleus after proapoptotic stress. Down-regulates the expression of LGALS3 by inhibiting NFKB1. Modulates isoactin dynamics to regulate the morphological alterations required for cell growth and motility. Interaction with ARF6 may modulate cell shape and motility after injury. May be involved in multiple neurite formation. In Bos taurus (Bovine), this protein is Uveal autoantigen with coiled-coil domains and ankyrin repeats protein (UACA).